Here is a 509-residue protein sequence, read N- to C-terminus: Maturase K (509 aa).

This sequence belongs to the intron maturase 2 family. MatK subfamily.

The protein localises to the plastid. It is found in the chloroplast. In terms of biological role, usually encoded in the trnK tRNA gene intron. Probably assists in splicing its own and other chloroplast group II introns. This is Maturase K from Nicotiana clevelandii (Wild tobacco).